Consider the following 129-residue polypeptide: ATP synthase epsilon chain (129 aa).

Belongs to the ATPase epsilon chain family. As to quaternary structure, F-type ATPases have 2 components, CF(1) - the catalytic core - and CF(0) - the membrane proton channel. CF(1) has five subunits: alpha(3), beta(3), gamma(1), delta(1), epsilon(1). CF(0) has three main subunits: a, b and c.

It localises to the cell inner membrane. In terms of biological role, produces ATP from ADP in the presence of a proton gradient across the membrane. The sequence is that of ATP synthase epsilon chain from Campylobacter curvus (strain 525.92).